The primary structure comprises 426 residues: Enolase (426 aa).

Gln163 provides a ligand contact to (2R)-2-phosphoglycerate. The Proton donor role is filled by Glu205. Mg(2+) contacts are provided by Asp242, Glu286, and Asp313. Residues Lys338, Arg367, Ser368, and Lys389 each contribute to the (2R)-2-phosphoglycerate site. Lys338 (proton acceptor) is an active-site residue.

It belongs to the enolase family. Requires Mg(2+) as cofactor.

The protein resides in the cytoplasm. Its subcellular location is the secreted. It localises to the cell surface. The enzyme catalyses (2R)-2-phosphoglycerate = phosphoenolpyruvate + H2O. Its pathway is carbohydrate degradation; glycolysis; pyruvate from D-glyceraldehyde 3-phosphate: step 4/5. Functionally, catalyzes the reversible conversion of 2-phosphoglycerate (2-PG) into phosphoenolpyruvate (PEP). It is essential for the degradation of carbohydrates via glycolysis. The polypeptide is Enolase (Gemmatimonas aurantiaca (strain DSM 14586 / JCM 11422 / NBRC 100505 / T-27)).